The sequence spans 261 residues: Phosphonates import ATP-binding protein PhnC (261 aa).

Residues 9-253 (IQLKDVSKIY…VFDDIYNGGN (245 aa)) form the ABC transporter domain. ATP is bound at residue 42–49 (GLSGAGKS).

Belongs to the ABC transporter superfamily. Phosphonates importer (TC 3.A.1.9.1) family. In terms of assembly, the complex is composed of two ATP-binding proteins (PhnC), two transmembrane proteins (PhnE) and a solute-binding protein (PhnD).

It localises to the cell membrane. It catalyses the reaction phosphonate(out) + ATP + H2O = phosphonate(in) + ADP + phosphate + H(+). Its function is as follows. Part of the ABC transporter complex PhnCDE involved in phosphonates import. Responsible for energy coupling to the transport system. The chain is Phosphonates import ATP-binding protein PhnC from Lactobacillus gasseri (strain ATCC 33323 / DSM 20243 / BCRC 14619 / CIP 102991 / JCM 1131 / KCTC 3163 / NCIMB 11718 / NCTC 13722 / AM63).